We begin with the raw amino-acid sequence, 77 residues long: Defensin-like protein (77 aa).

Residues 1-30 (MERGMRLFSSLVLVLLLVTATEMGPKVAEA) form the signal peptide. 4 disulfide bridges follow: C33/C77, C44/C64, C50/C71, and C54/C73.

It belongs to the DEFL family.

The protein localises to the secreted. The protein is Defensin-like protein of Nelumbo nucifera (Sacred lotus).